The chain runs to 137 residues: Gonadotropin subunit beta-1 (137 aa).

Residues 1-24 (MYCTHLKTLQLVVMATLWVTPVRA) form the signal peptide. Disulfide bonds link Cys-32-Cys-78, Cys-46-Cys-93, Cys-55-Cys-108, Cys-59-Cys-110, and Cys-113-Cys-120. The N-linked (GlcNAc...) asparagine glycan is linked to Asn-36.

Belongs to the glycoprotein hormones subunit beta family. Heterodimer of an alpha and a beta chain.

It localises to the secreted. Functionally, involved in gametogenesis and steroidogenesis. The protein is Gonadotropin subunit beta-1 (cgba) of Oncorhynchus masou (Cherry salmon).